Consider the following 401-residue polypeptide: Probable tRNA sulfurtransferase (401 aa).

A THUMP domain is found at 60–165 (EAVMARLKHV…EDATYLTFRD (106 aa)). ATP-binding positions include 183–184 (MI), 208–209 (HF), R265, G287, and Q296.

This sequence belongs to the ThiI family.

The protein resides in the cytoplasm. The enzyme catalyses [ThiI sulfur-carrier protein]-S-sulfanyl-L-cysteine + a uridine in tRNA + 2 reduced [2Fe-2S]-[ferredoxin] + ATP + H(+) = [ThiI sulfur-carrier protein]-L-cysteine + a 4-thiouridine in tRNA + 2 oxidized [2Fe-2S]-[ferredoxin] + AMP + diphosphate. It carries out the reaction [ThiS sulfur-carrier protein]-C-terminal Gly-Gly-AMP + S-sulfanyl-L-cysteinyl-[cysteine desulfurase] + AH2 = [ThiS sulfur-carrier protein]-C-terminal-Gly-aminoethanethioate + L-cysteinyl-[cysteine desulfurase] + A + AMP + 2 H(+). It functions in the pathway cofactor biosynthesis; thiamine diphosphate biosynthesis. Its function is as follows. Catalyzes the ATP-dependent transfer of a sulfur to tRNA to produce 4-thiouridine in position 8 of tRNAs, which functions as a near-UV photosensor. Also catalyzes the transfer of sulfur to the sulfur carrier protein ThiS, forming ThiS-thiocarboxylate. This is a step in the synthesis of thiazole, in the thiamine biosynthesis pathway. The sulfur is donated as persulfide by IscS. This chain is Probable tRNA sulfurtransferase, found in Bacillus licheniformis (strain ATCC 14580 / DSM 13 / JCM 2505 / CCUG 7422 / NBRC 12200 / NCIMB 9375 / NCTC 10341 / NRRL NRS-1264 / Gibson 46).